Here is a 411-residue protein sequence, read N- to C-terminus: Na(+)-translocating NADH-quinone reductase subunit F (411 aa).

Residues valine 5–isoleucine 25 traverse the membrane as a helical segment. Positions glycine 36–isoleucine 130 constitute a 2Fe-2S ferredoxin-type domain. [2Fe-2S] cluster is bound by residues cysteine 73, cysteine 79, cysteine 82, and cysteine 114. In terms of domain architecture, FAD-binding FR-type spans valine 133–lysine 273. The tract at residues aspartate 276–methionine 393 is catalytic.

The protein belongs to the NqrF family. As to quaternary structure, composed of six subunits; NqrA, NqrB, NqrC, NqrD, NqrE and NqrF. The cofactor is [2Fe-2S] cluster. It depends on FAD as a cofactor.

The protein resides in the cell inner membrane. It catalyses the reaction a ubiquinone + n Na(+)(in) + NADH + H(+) = a ubiquinol + n Na(+)(out) + NAD(+). Functionally, NQR complex catalyzes the reduction of ubiquinone-1 to ubiquinol by two successive reactions, coupled with the transport of Na(+) ions from the cytoplasm to the periplasm. The first step is catalyzed by NqrF, which accepts electrons from NADH and reduces ubiquinone-1 to ubisemiquinone by a one-electron transfer pathway. This is Na(+)-translocating NADH-quinone reductase subunit F from Haemophilus influenzae (strain ATCC 51907 / DSM 11121 / KW20 / Rd).